Consider the following 249-residue polypeptide: Ubiquinone biosynthesis O-methyltransferase (249 aa).

The interval 1-21 (MIPEVSNEASQPAAHRQENVD) is disordered. Arg-52, Gly-72, Asp-93, and Met-137 together coordinate S-adenosyl-L-methionine.

Belongs to the methyltransferase superfamily. UbiG/COQ3 family.

It carries out the reaction a 3-demethylubiquinol + S-adenosyl-L-methionine = a ubiquinol + S-adenosyl-L-homocysteine + H(+). The enzyme catalyses a 3-(all-trans-polyprenyl)benzene-1,2-diol + S-adenosyl-L-methionine = a 2-methoxy-6-(all-trans-polyprenyl)phenol + S-adenosyl-L-homocysteine + H(+). Its pathway is cofactor biosynthesis; ubiquinone biosynthesis. O-methyltransferase that catalyzes the 2 O-methylation steps in the ubiquinone biosynthetic pathway. This chain is Ubiquinone biosynthesis O-methyltransferase, found in Sodalis glossinidius (strain morsitans).